Here is a 273-residue protein sequence, read N- to C-terminus: SKA complex subunit 1 homolog (273 aa).

Positions 77–97 (KKLVQRSLKEEEKLQHMLANL) form a coiled coil.

The protein belongs to the SKA1 family.

The protein is SKA complex subunit 1 homolog of Zea mays (Maize).